An 89-amino-acid chain; its full sequence is Small ribosomal subunit protein uS14A (89 aa).

It belongs to the universal ribosomal protein uS14 family. In terms of assembly, part of the 30S ribosomal subunit. Contacts proteins S3 and S10.

In terms of biological role, binds 16S rRNA, required for the assembly of 30S particles and may also be responsible for determining the conformation of the 16S rRNA at the A site. The protein is Small ribosomal subunit protein uS14A of Staphylococcus aureus (strain MRSA252).